Consider the following 474-residue polypeptide: Dihydrolipoyl dehydrogenase (474 aa).

Residues 36-44 (EAKDMGGTC), lysine 53, and glycine 119 contribute to the FAD site. An intrachain disulfide couples cysteine 44 to cysteine 49. NAD(+) is bound by residues 184–188 (GSGYI), glutamate 207, and 275–278 (ATGR). Residues aspartate 323 and alanine 331 each contribute to the FAD site. The active-site Proton acceptor is the histidine 459.

Belongs to the class-I pyridine nucleotide-disulfide oxidoreductase family. Homodimer. FAD is required as a cofactor.

The protein localises to the cell inner membrane. The enzyme catalyses N(6)-[(R)-dihydrolipoyl]-L-lysyl-[protein] + NAD(+) = N(6)-[(R)-lipoyl]-L-lysyl-[protein] + NADH + H(+). Functionally, lipoamide dehydrogenase is a component of the alpha-ketoacid dehydrogenase complexes. This is Dihydrolipoyl dehydrogenase (lpdA) from Synechocystis sp. (strain ATCC 27184 / PCC 6803 / Kazusa).